Reading from the N-terminus, the 111-residue chain is Cell cycle protein GpsB (111 aa).

Positions 32–63 (LDDIMKDYDAYEAIIKELKGEIARLKAQAANS) form a coiled coil. A disordered region spans residues 59-80 (QAANSPKTTLPTEESNDVLRTE). Over residues 60-71 (AANSPKTTLPTE) the composition is skewed to polar residues.

It belongs to the GpsB family. As to quaternary structure, forms polymers through the coiled coil domains. Interacts with PBP1, MreC and EzrA.

Its subcellular location is the cytoplasm. Divisome component that associates with the complex late in its assembly, after the Z-ring is formed, and is dependent on DivIC and PBP2B for its recruitment to the divisome. Together with EzrA, is a key component of the system that regulates PBP1 localization during cell cycle progression. Its main role could be the removal of PBP1 from the cell pole after pole maturation is completed. Also contributes to the recruitment of PBP1 to the division complex. Not essential for septum formation. The chain is Cell cycle protein GpsB from Streptococcus suis (strain 98HAH33).